Reading from the N-terminus, the 316-residue chain is tRNA dimethylallyltransferase (316 aa).

ATP is bound at residue 17–24; that stretch reads GPTASGKT. Position 19–24 (19–24) interacts with substrate; that stretch reads TASGKT. Interaction with substrate tRNA regions lie at residues 42 to 45, 166 to 170, and 247 to 252; these read DSAL, QRLSR, and RCVGYR.

Belongs to the IPP transferase family. As to quaternary structure, monomer. It depends on Mg(2+) as a cofactor.

It catalyses the reaction adenosine(37) in tRNA + dimethylallyl diphosphate = N(6)-dimethylallyladenosine(37) in tRNA + diphosphate. Functionally, catalyzes the transfer of a dimethylallyl group onto the adenine at position 37 in tRNAs that read codons beginning with uridine, leading to the formation of N6-(dimethylallyl)adenosine (i(6)A). The sequence is that of tRNA dimethylallyltransferase from Salmonella paratyphi A (strain ATCC 9150 / SARB42).